Consider the following 68-residue polypeptide: Neuronal regeneration-related protein (68 aa).

Positions 21–54 are disordered; the sequence is MEGRLPKGRLPVPKEVNRKKNDETNAASLTPLGS. Positions 44-54 are enriched in polar residues; it reads TNAASLTPLGS.

As to quaternary structure, interacts with the latency-associated peptides (LAP) of TGFB1 and TGFB2; the interaction results in a decrease in TGFB autoinduction. Interacts with FLNA. Post-translationally, phosphorylated on Ser-59. Phosphorylation decreases stability and activity.

The protein resides in the cytoplasm. Its function is as follows. May have roles in neural function and cellular differentiation. Ectopic expression promotes axonal regeneration, induces differentiation of fibroblast into myofibroblast, induces myofibroblast ameboid migration, augments motility of gliomas, and increases retinoic-acid regulation of lipid-droplet biogenesis. Down-regulates the expression of TGFB1 and TGFB2 but not of TGFB3. May play a role in the regulation of alveolar generation. The polypeptide is Neuronal regeneration-related protein (NREP) (Pongo abelii (Sumatran orangutan)).